Consider the following 527-residue polypeptide: F-box protein SKIP2 (527 aa).

Positions 39–85 (DRDFTGDLPDECLAHVFQFLGAGDRKRCSLVCKRWLLVDGQSRHRLS) constitute an F-box domain.

As to quaternary structure, part of a SCF (ASK-cullin-F-box) protein ligase complex. Interacts with SKP1A/ASK1, SKP1B/ASK2 and ASK11.

Its subcellular location is the nucleus. It participates in protein modification; protein ubiquitination. Its function is as follows. Component of SCF(ASK-cullin-F-box) E3 ubiquitin ligase complexes, which may mediate the ubiquitination and subsequent proteasomal degradation of target proteins. In Arabidopsis thaliana (Mouse-ear cress), this protein is F-box protein SKIP2 (SKIP2).